The chain runs to 131 residues: Probable flagellum biosynthesis repressor protein FlbT (131 aa).

The protein belongs to the FlbT family.

In terms of biological role, has a post-transcriptional repressor function in flagellum biogenesis. Associates with the 5'-UTR of fljK mRNA and promotes its degradation. The sequence is that of Probable flagellum biosynthesis repressor protein FlbT from Caulobacter sp. (strain K31).